We begin with the raw amino-acid sequence, 209 residues long: Ribosomal RNA large subunit methyltransferase E (209 aa).

Residues Gly63, Trp65, Asp83, Asp99, and Asp124 each contribute to the S-adenosyl-L-methionine site. Lys164 serves as the catalytic Proton acceptor.

It belongs to the class I-like SAM-binding methyltransferase superfamily. RNA methyltransferase RlmE family.

The protein resides in the cytoplasm. The enzyme catalyses uridine(2552) in 23S rRNA + S-adenosyl-L-methionine = 2'-O-methyluridine(2552) in 23S rRNA + S-adenosyl-L-homocysteine + H(+). In terms of biological role, specifically methylates the uridine in position 2552 of 23S rRNA at the 2'-O position of the ribose in the fully assembled 50S ribosomal subunit. This chain is Ribosomal RNA large subunit methyltransferase E, found in Shewanella halifaxensis (strain HAW-EB4).